The chain runs to 250 residues: 3-deoxy-manno-octulosonate cytidylyltransferase (250 aa).

The protein belongs to the KdsB family.

It is found in the cytoplasm. It catalyses the reaction 3-deoxy-alpha-D-manno-oct-2-ulosonate + CTP = CMP-3-deoxy-beta-D-manno-octulosonate + diphosphate. Its pathway is nucleotide-sugar biosynthesis; CMP-3-deoxy-D-manno-octulosonate biosynthesis; CMP-3-deoxy-D-manno-octulosonate from 3-deoxy-D-manno-octulosonate and CTP: step 1/1. The protein operates within bacterial outer membrane biogenesis; lipopolysaccharide biosynthesis. Functionally, activates KDO (a required 8-carbon sugar) for incorporation into bacterial lipopolysaccharide in Gram-negative bacteria. The sequence is that of 3-deoxy-manno-octulosonate cytidylyltransferase from Legionella pneumophila (strain Paris).